The chain runs to 710 residues: Ferrioxamine receptor (710 aa).

Residues 1 to 26 (MFSAFIIKRSAILCSLAMFIPLASIA) form the signal peptide. A TonB box motif is present at residues 28 to 35 (DTIEVTAK). Beta stranded transmembrane passes span 29–37 (TIEVTAKAG), 65–73 (TAQSVSVVT), 91–99 (YTPGVFTGF), 106–114 (YDTVALRGF), 137–145 (NVLQVDPWF), 152–160 (IKGPSSALY), 180–188 (SEGHFRLTA), 194–202 (QVAAFDYTD), 208–216 (WAFRLTGIT), 259–267 (GGYHSAVPA), 271–279 (IYGQKLSRG), 293–301 (WQQIYSYEF), 309–317 (WSFRQNASY), 353–361 (FAVDNQLEA), 370–378 (HKVLLGVDF), 427–435 (YEQSGVYLQ), 443–451 (WHLNLSGRY), 476–484 (GRASLLYSF), 491–499 (YVSYSQAIT), 517–525 (EQYEVGIIY), 531–539 (TSLYSAALY), 555–563 (YYVPAGKVN), 567–575 (LELEARSQI), 579–587 (LSVIAGYTY), 610–618 (NMASLWAQY), 624–632 (INVGAGIRY), 649–657 (YTLGDASVR), 671–679 (FVQLNVNNI), 684–692 (YVAACYSTS), and 702–710 (VQATVGYDF). The TBDR plug domain occupies 61 to 174 (PLILTAQSVS…PGGVVMMTSK (114 aa)). Residues 181 to 710 (EGHFRLTAGN…SVQATVGYDF (530 aa)) enclose the TBDR beta-barrel domain. The short motif at 693-710 (YCYWGAERSVQATVGYDF) is the TonB C-terminal box element.

This sequence belongs to the TonB-dependent receptor family.

The protein localises to the cell outer membrane. Its function is as follows. Ferrioxamine binding and uptake, in association with the TonB protein. This is Ferrioxamine receptor (foxA) from Yersinia enterocolitica.